Consider the following 52-residue polypeptide: uncharacterized protein (52 aa).

A helical membrane pass occupies residues methionine 7–phenylalanine 27.

It is found in the membrane. This is an uncharacterized protein from Bacillus subtilis (strain 168).